The chain runs to 618 residues: Prothrombin (618 aa).

The signal sequence occupies residues 1–24 (MSHVRGLGLPGCLALAALVSLVHS). A propeptide spanning residues 25–43 (QHVFLAPQQALSLLQRVRR) is cleaved from the precursor. Positions 44 to 90 (ANSGFLEELRKGNLERECVEEQCSYEEAFEALESPQDTDVFWAKYTV) constitute a Gla domain. 10 positions are modified to 4-carboxyglutamate: Glu-50, Glu-51, Glu-58, Glu-60, Glu-63, Glu-64, Glu-69, Glu-70, Glu-73, and Glu-76. Cys-61 and Cys-66 are oxidised to a cystine. 10 disulfides stabilise this stretch: Cys-91–Cys-104, Cys-109–Cys-187, Cys-130–Cys-170, Cys-158–Cys-182, Cys-215–Cys-293, Cys-236–Cys-276, Cys-264–Cys-288, Cys-333–Cys-479, Cys-388–Cys-404, and Cys-533–Cys-547. Kringle domains lie at 109-187 (CAMD…VPVC) and 215-292 (CLTE…NLNY). N-linked (GlcNAc...) asparagine glycans are attached at residues Asn-122 and Asn-144. One can recognise a Peptidase S1 domain in the interval 361–615 (IVEGWDAEKG…LKRWIQKVID (255 aa)). His-403 acts as the Charge relay system in catalysis. Asn-413 carries N-linked (GlcNAc...) asparagine glycosylation. Residue Asp-459 is the Charge relay system of the active site. The interval 548–570 (AGFKVNDTKRGDACEGDSGGPFV) is high affinity receptor-binding region which is also known as the TP508 peptide. N-linked (GlcNAc...) asparagine glycosylation occurs at Asn-553. Cys-561 and Cys-591 are joined by a disulfide. Ser-565 acts as the Charge relay system in catalysis.

It belongs to the peptidase S1 family. As to quaternary structure, heterodimer (named alpha-thrombin) of a light and a heavy chain; disulfide-linked. Forms a heterodimer with SERPINA5. In plasma, interacts (via N-terminus) with alpha-1-microglobulin; this interaction does not prevent the activation of prothrombin to thrombin. In terms of processing, the gamma-carboxyglutamyl residues, which bind calcium ions, result from the carboxylation of glutamyl residues by a microsomal enzyme, the vitamin K-dependent carboxylase. The modified residues are necessary for the calcium-dependent interaction with a negatively charged phospholipid surface, which is essential for the conversion of prothrombin to thrombin. In the penultimate step of the coagulation cascade, prothrombin is converted to thrombin by the prothrombinase complex composed of factor Xa (F10), cofactor Va (F5), and phospholipids. This activation requires factor Xa-catalyzed sequential cleavage at 2 sites, Arg-311 and Arg-360, along 2 possible pathways. In the first pathway, the first cleavage occurs at Arg-311, leading to the formation of the inactive intermediate prethrombin-2. This pathway preferentially occurs on platelets and in the absence of cofactor Va. In the second pathway, the first cleavage occurs at Arg-360, which separates protease domain into 2 chains that remain connected through a disulfide bond and generates the active intermediate meizothrombin. The presence of cofactor Va directs activation along the meizothrombin pathway and greatly accelerates the rate of cleavage at Arg-360, but has a smaller effect on the cleavage of meizothrombin at Arg-311. Meizothrombin accumulates as an intermediate when prothrombinase is assembled on the membrane of red blood cells.

It carries out the reaction Selective cleavage of Arg-|-Gly bonds in fibrinogen to form fibrin and release fibrinopeptides A and B.. With respect to regulation, activity is promoted in the presence of negatively charged surfaces, such as polyphosphate and dextran sulfate. Inhibited by SERPINA5. Its function is as follows. Thrombin, which cleaves bonds after Arg and Lys, converts fibrinogen to fibrin and activates factors V, VII, VIII, XIII, and, in complex with thrombomodulin, protein C. Functions in blood homeostasis, inflammation and wound healing. Activates coagulation factor XI (F11); activation is promoted by the contact with negatively charged surfaces. Triggers the production of pro-inflammatory cytokines, such as MCP-1/CCL2 and IL8/CXCL8, in endothelial cells. The chain is Prothrombin (F2) from Mus musculus (Mouse).